Reading from the N-terminus, the 850-residue chain is DEAD-box ATP-dependent RNA helicase 26 (850 aa).

Disordered stretches follow at residues 60–82 (TRPE…IRAS) and 106–350 (GKFT…ENDE). Residues 61 to 71 (RPERSQPEFAR) are compositionally biased toward basic and acidic residues. T109 carries the post-translational modification Phosphothreonine. A Phosphoserine modification is found at S110. Composition is skewed to basic and acidic residues over residues 118–140 (EVVR…EGQS) and 284–299 (GRND…REPG). Acidic residues-rich tracts occupy residues 315-325 (LEEEDSSDDDE) and 336-350 (LPSE…ENDE). Residues 382–410 (TRFDQFPLSPLSLKAIKDAGFETMTVVQE) carry the Q motif motif. The 184-residue stretch at 413 to 596 (LPIILQGKDV…HVALKRDHEF (184 aa)) folds into the Helicase ATP-binding domain. An ATP-binding site is contributed by 426–433 (AKTGTGKT). The DEAD box signature appears at 544–547 (DEAD). Positions 630–777 (LLKEHIADNV…IDPEAVKRVQ (148 aa)) constitute a Helicase C-terminal domain.

It belongs to the DEAD box helicase family.

The catalysed reaction is ATP + H2O = ADP + phosphate + H(+). In Arabidopsis thaliana (Mouse-ear cress), this protein is DEAD-box ATP-dependent RNA helicase 26 (RH26).